A 717-amino-acid polypeptide reads, in one-letter code: MATPAAVNPPEMASDIPGSVTLPVAPMAATGQVRMAGAMPARGGKRRSGMDFDDEDGEGPSKFSRENHSEIERRRRNKMTQYITELSDMVPTCSALARKPDKLTILRMAVSHMKSMRGTGNKSTDGAYKPSFLTEQELKHLILEAADGFLFVVAAETGRVIYVSDSVTPVLNQPQSEWFGSTLYEQVHPDDVEKLREQLCTSENSMTGRILDLKTGTVKKEGQQSSMRMCMGSRRSFICRMRCGNAPLDHLPLNRITTMRKRFRNGLGPVKEGEAQYAVVHCTGYIKAWPPAGMTIPEEDADVGQGSKYCLVAIGRLQVTSSPVCMDMNGMSVPTEFLSRHNSDGIITFVDPRCISVIGYQPQDLLGKDILEFCHPEDQSHLRESFQQVVKLKGQVLSVMYRFRTKNREWMLIRTSSFTFQNPYSDEIEYIICTNTNVKQLQQQQAELEVHQRDGLSSYDLSQVPVPNLPAGVHEAGKSVEKADAIFSQERDPRFAEMFAGISASEKKMMSSASAAGTQQIYSQGSPFPSGHSGKAFSSSVVHVPGVNDIQSSSSTGQNMSQISRQLNQSQVAWTGSRPPFPGQQIPSQSSKTQSSPFGIGTSHTYPADPSSYSPLSSPATSSPSGNAYSSLANRTPGFAESGQSSGQFQGRPSEVWSQWQSQHHGQQSGEQHSHQQPGQTEVFQDMLPMPGDPTQGTGNYNIEDFADLGMFPPFSE.

Disordered regions lie at residues 1 to 20 (MATPAAVNPPEMASDIPGSV) and 35 to 74 (MAGAMPARGGKRRSGMDFDDEDGEGPSKFSRENHSEIERR). Arg42 bears the Omega-N-methylarginine mark. Over residues 63–73 (FSRENHSEIER) the composition is skewed to basic and acidic residues. The 54-residue stretch at 63–116 (FSRENHSEIERRRRNKMTQYITELSDMVPTCSALARKPDKLTILRMAVSHMKSM) folds into the bHLH domain. 2 PAS domains span residues 134 to 209 (TEQE…MTGR) and 323 to 393 (PVCM…VKLK). One can recognise a PAC domain in the interval 398–441 (SVMYRFRTKNREWMLIRTSSFTFQNPYSDEIEYIICTNTNVKQL). Positions 548 to 717 (NDIQSSSSTG…DLGMFPPFSE (170 aa)) are disordered. 2 stretches are compositionally biased toward polar residues: residues 549-574 (DIQSSSSTGQNMSQISRQLNQSQVAW) and 585-605 (QIPSQSSKTQSSPFGIGTSHT). Low complexity predominate over residues 610-625 (PSSYSPLSSPATSSPS). Over residues 642–651 (SGQSSGQFQG) the composition is skewed to polar residues. Over residues 658 to 680 (SQWQSQHHGQQSGEQHSHQQPGQ) the composition is skewed to low complexity.

As to quaternary structure, efficient DNA binding requires dimerization with another bHLH protein. Heterodimer with NPAS4. Heterodimer with SIM1. Heterodimer with the aryl hydrocarbon receptor (AHR) or the SIM1 protein. Interacts with TACC3.

The protein localises to the nucleus. Functionally, transcription factor that plays a role in the development of the hypothalamo-pituitary axis, postnatal brain growth, and visual and renal function. Specifically recognizes the xenobiotic response element (XRE). This is Aryl hydrocarbon receptor nuclear translocator 2 (ARNT2) from Homo sapiens (Human).